The chain runs to 560 residues: IQ motif and ankyrin repeat domain-containing protein 1 (560 aa).

The interval 1 to 72 is disordered; sequence MDSKKGRPKA…DRAARAIQGA (72 aa). The IQ domain occupies 62–91; sequence EDRAARAIQGAFRQLRARRELARRREERRE. ANK repeat units lie at residues 191-223 and 224-253; these read YGNTPLSEAAAGGQPLAIQLRAELGASPNSKGA and FGPTPLYRAAFGGHLAAVEVLLKLGADPRV. A coiled-coil region spans residues 281–398; the sequence is LTEAMLQNME…RLELREQTQE (118 aa).

In Homo sapiens (Human), this protein is IQ motif and ankyrin repeat domain-containing protein 1.